The following is a 473-amino-acid chain: Sorting nexin-17 (473 aa).

Residues 1–108 form the PX domain; it reads MHFSIPETEV…SFLRKAQQET (108 aa). A 1,2-diacyl-sn-glycero-3-phospho-(1D-myo-inositol-3-phosphate)-binding residues include Arg35, Ser37, Lys61, and Arg74. In terms of domain architecture, Ras-associating spans 114–205; it reads EEVQLEIYLS…YRIILRKSYW (92 aa). The segment at 114–433 is FERM-like; it reads EEVQLEIYLS…DPNREQVVKL (320 aa). Residues 269–433 are PTB-like F3 module; sequence GYIKFDPCIT…DPNREQVVKL (165 aa). Positions 391–431 are disordered; that stretch reads SIKKQMQKKRLNGSLQRSDSQQAVKSPPILDSPDPNREQVV. Positions 403-414 are enriched in polar residues; it reads GSLQRSDSQQAV.

Belongs to the sorting nexin family. As to quaternary structure, monomer. Interacts with CCDC22, CCDC93, DSCR3 and VPS35L; the interaction with DSCR3 is direct and associates SNX17 with the retriever and CCC complexes.

The protein resides in the cytoplasm. The protein localises to the early endosome. It is found in the cytoplasmic vesicle membrane. In terms of biological role, critical regulator of endosomal recycling of numerous surface proteins, including integrins, signaling receptor and channels. Binds to NPxY sequences in the cytoplasmic tails of target cargos. Associates with retriever and CCC complexes to prevent lysosomal degradation and promote cell surface recycling of numerous cargos such as integrins ITGB1, ITGB5 and their associated alpha subunits. Also required for maintenance of normal cell surface levels of APP and LRP1. Interacts with membranes containing phosphatidylinositol 3-phosphate (PtdIns(3P)). The polypeptide is Sorting nexin-17 (snx17) (Danio rerio (Zebrafish)).